Reading from the N-terminus, the 971-residue chain is UPF0182 protein RER_22310 (971 aa).

Helical transmembrane passes span 16-36, 61-81, 112-132, 172-192, 209-229, 257-277, and 286-306; these read ILLV…RLIG, FVLF…AMLL, LFGV…AQAN, WLFV…YVFG, VQLA…YWFD, AKLI…ASIF, and MAVA…PMIV. Positions 890-927 are disordered; it reads GSAATVTQPAPDPDTGAQPETPTTPTAPAPPASSDDVT.

This sequence belongs to the UPF0182 family.

The protein resides in the cell membrane. This chain is UPF0182 protein RER_22310, found in Rhodococcus erythropolis (strain PR4 / NBRC 100887).